The primary structure comprises 274 residues: 2-dehydro-3-deoxyphosphooctonate aldolase (274 aa).

The protein belongs to the KdsA family.

It localises to the cytoplasm. The enzyme catalyses D-arabinose 5-phosphate + phosphoenolpyruvate + H2O = 3-deoxy-alpha-D-manno-2-octulosonate-8-phosphate + phosphate. The protein operates within carbohydrate biosynthesis; 3-deoxy-D-manno-octulosonate biosynthesis; 3-deoxy-D-manno-octulosonate from D-ribulose 5-phosphate: step 2/3. It functions in the pathway bacterial outer membrane biogenesis; lipopolysaccharide biosynthesis. This chain is 2-dehydro-3-deoxyphosphooctonate aldolase, found in Rickettsia typhi (strain ATCC VR-144 / Wilmington).